Here is a 516-residue protein sequence, read N- to C-terminus: MEFSTKALDWSKAGQNGFLATKTDCLVVGLFEGQNLGGVAKALDVATKGLVGRLVKQGDFEGKRGTHLMLHEVAGVGAARVLLVGLGKEADFTDKAFADAVRTAVRALSSTRATSALWCLAQQAPQQRDVSWAVITTITLVREAGYRLLERHPGLKRANAQNAASGKPNGNDKSSLRKVVIAVDSGDARAATQAAVRGTAIANGMELTRDLGNLPSNICTPTYLANTARSIAKRHKLKAEILGRKQIEALNMGAFLAVTKGSAEPPQFIVLRYDGGGARQAPVVLVGKGITFDTGGISLKPGEGMDEMKYDMCGAASVLGTIQAVAEMGLKLNVVAVVPTCENMPSGVATKPGDVVTSMSGQTIEILNTDAEGRLILCDALTYVERFKPAAVIDVATLTGACIIALGHVNSGLYARSDALADALLQAGRRAMDTAWRMPLDDEYQDQLKSNFADMGNIGGRPAGSVTAACFLARFTEKYDWAHLDIAGTAWKSGAAKGATGRPVPLLTQFLMDRAA.

2 residues coordinate Mn(2+): lysine 288 and aspartate 293. Lysine 300 is an active-site residue. The Mn(2+) site is built by aspartate 311, aspartate 370, and glutamate 372. The active site involves arginine 374.

Belongs to the peptidase M17 family. Mn(2+) serves as cofactor.

Its subcellular location is the cytoplasm. It catalyses the reaction Release of an N-terminal amino acid, Xaa-|-Yaa-, in which Xaa is preferably Leu, but may be other amino acids including Pro although not Arg or Lys, and Yaa may be Pro. Amino acid amides and methyl esters are also readily hydrolyzed, but rates on arylamides are exceedingly low.. It carries out the reaction Release of an N-terminal amino acid, preferentially leucine, but not glutamic or aspartic acids.. Its function is as follows. Presumably involved in the processing and regular turnover of intracellular proteins. Catalyzes the removal of unsubstituted N-terminal amino acids from various peptides. This chain is Probable cytosol aminopeptidase, found in Cupriavidus taiwanensis (strain DSM 17343 / BCRC 17206 / CCUG 44338 / CIP 107171 / LMG 19424 / R1) (Ralstonia taiwanensis (strain LMG 19424)).